A 438-amino-acid polypeptide reads, in one-letter code: Battenin (438 aa).

Residues 1–25 (MGGCAGSRRRLSDSEGEETVPEPRL) are disordered. Topologically, residues 1-37 (MGGCAGSRRRLSDSEGEETVPEPRLPLLDHQGAHWKN) are cytoplasmic. A phosphoserine mark is found at S12 and S14. The helical transmembrane segment at 38 to 58 (AVGFWLLGLCNNFSYVVMLSA) threads the bilayer. Topologically, residues 59 to 127 (AHDILSHERT…GLHLLPYSPR (69 aa)) are lumenal. N-linked (GlcNAc...) asparagine glycosylation is found at N71 and N85. A helical transmembrane segment spans residues 128 to 148 (VLVSGICAAGSFVLVAFSHSV). Topologically, residues 149–151 (GTS) are cytoplasmic. The helical transmembrane segment at 152–172 (LCGVVLASISSGLGEVTFLSL) threads the bilayer. At 173–182 (TAFYPRAVIS) the chain is on the lumenal side. A helical membrane pass occupies residues 183–203 (WWSSGTGGAGLLGALSYLGLT). Residues 204 to 277 (QAGLSPQQTL…SLSLRERWTV (74 aa)) are Cytoplasmic-facing. The segment at 237 to 268 (QDPGGEEEAESSARQPLIRTEAPESKPGSSSS) is disordered. The short motif at 242-244 (EEE) is the Lysosomal targeting motif element. The Lysosomal targeting motif. Required for AP1G1, AP2A2 and AP3D1 interaction motif lies at 253 to 254 (LI). The helical transmembrane segment at 278 to 298 (FKGLLWYIVPLVVVYFAEYFI) threads the bilayer. Topologically, residues 299 to 346 (NQGLFELLFFRNTSLSHAQQYRWYQMLYQAGVFASRSSLRCCHIRFTW) are lumenal. The N-linked (GlcNAc...) asparagine glycan is linked to N310. A helical transmembrane segment spans residues 347–367 (ALALLQCLNLAFLLADVWFGF). Over 368–438 (LLSIYFVFLI…PLHDFLCQLS (71 aa)) the chain is Cytoplasmic. A Lysosomal targeting motif motif is present at residues 409–419 (MATTCISDTLG). C435 bears the Cysteine methyl ester mark. C435 carries S-farnesyl cysteine lipidation. Positions 436-438 (QLS) are cleaved as a propeptide — removed in mature form.

Belongs to the battenin family. Interacts with DCTN1, KIF3A, RAB7A and RILP. Interacts with CLN5. In terms of processing, highly glycosylated. Post-translationally, farnesylation is important for trafficking to lysosomes.

The protein localises to the lysosome membrane. Its subcellular location is the late endosome. It is found in the lysosome. Mediates microtubule-dependent, anterograde transport connecting the Golgi network, endosomes, autophagosomes, lysosomes and plasma membrane, and participates in several cellular processes such as regulation of lysosomal pH, lysosome protein degradation, receptor-mediated endocytosis, autophagy, transport of proteins and lipids from the TGN, apoptosis and synaptic transmission. Facilitates the proteins transport from trans-Golgi network (TGN)-to other membrane compartments such as transport of microdomain-associated proteins to the plasma membrane, IGF2R transport to the lysosome where it regulates the CTSD release leading to regulation of CTSD maturation and thereby APP intracellular processing. Moreover regulates CTSD activity in response to osmotic stress. Also binds galactosylceramide and transports it from the trans Golgi to the rafts, which may have immediate and downstream effects on cell survival by modulating ceramide synthesis. At the plasma membrane, regulates actin-dependent events including filopodia formation, cell migration, and pinocytosis through ARF1-CDC42 pathway and also the cytoskeleton organization through interaction with MYH10 and fodrin leading to the regulation of the plasma membrane association of Na+, K+ ATPase complex. Regulates synaptic transmission in the amygdala, hippocampus, and cerebellum through regulation of synaptic vesicles density and their proximity to active zones leading to modulation of short-term plasticity and age-dependent anxious behavior, learning and memory. Regulates autophagic vacuoles (AVs) maturation by modulating the trafficking between endocytic and autophagolysosomal/lysosomal compartments, which involves vesicle fusion leading to regulation of degradation process. Also participates in cellular homeostasis of compounds such as, water, ions, amino acids, proteins and lipids in several tissue namely in brain and kidney through regulation of their transport and synthesis. The chain is Battenin from Macaca fascicularis (Crab-eating macaque).